The primary structure comprises 294 residues: 4-hydroxy-tetrahydrodipicolinate synthase (294 aa).

T47 is a binding site for pyruvate. The Proton donor/acceptor role is filled by Y136. K164 serves as the catalytic Schiff-base intermediate with substrate. V206 serves as a coordination point for pyruvate.

It belongs to the DapA family. Homotetramer; dimer of dimers.

It localises to the cytoplasm. It carries out the reaction L-aspartate 4-semialdehyde + pyruvate = (2S,4S)-4-hydroxy-2,3,4,5-tetrahydrodipicolinate + H2O + H(+). It functions in the pathway amino-acid biosynthesis; L-lysine biosynthesis via DAP pathway; (S)-tetrahydrodipicolinate from L-aspartate: step 3/4. Functionally, catalyzes the condensation of (S)-aspartate-beta-semialdehyde [(S)-ASA] and pyruvate to 4-hydroxy-tetrahydrodipicolinate (HTPA). This chain is 4-hydroxy-tetrahydrodipicolinate synthase, found in Cyanothece sp. (strain PCC 7425 / ATCC 29141).